Here is a 570-residue protein sequence, read N- to C-terminus: MASTSNTDRVIDAGMIKKAHPEQTPPDVSHEGDVATEKGDSDGVEQAAPTGPTDGTPWVTGIKLVMIMSGITLVCFLMLLDTSIISTATPRITSQFHSLPDVGWYGSAYLLASASLVPLTGKIYQNFNTKWSFVSFFAVFELGSLLCGVATSSKMLIVGRAVAGMGGSGIQNGAFTIIAGCVPMQRRPALTGLLMGFAQLGIVIGPLIGGAFTQYTTWRWCFYINLPIGAVVGLLLFFVHIPEQLPKPKGISVVHIILRKLDLVGFVLFAPAAVQFLLALQYGGNKYAWNSSVVIGLFCGAGATFVCFILWEWYKGDDAMIPYSMICRQTVWTSCVVYGFLMATLLVASYYLPIYFQAIKGVNAMLSGVYILPSILSQSALAIISGALVGRFGYYLPWSLAGGIVSSVGNGLLTTFTPSTSVGKWIGYQILLGAGRGAGLQMPIIAAQNNLPPPLIPVAMALIMFCQSFFGSTFLSYADVIFTNSLRNKLKEYAPEVPPESIIVAGATAFRKAVPADQLPGVLKAYSKSVDYVFYLAVGAAVATFVFSCGMGWKDIRGNEPPQPSGDEKV.

The segment at 14–54 (GMIKKAHPEQTPPDVSHEGDVATEKGDSDGVEQAAPTGPTD) is disordered. Over residues 28 to 41 (VSHEGDVATEKGDS) the composition is skewed to basic and acidic residues. Helical transmembrane passes span 65 to 85 (VMIMSGITLVCFLMLLDTSII), 99 to 119 (LPDVGWYGSAYLLASASLVPL), 131 to 151 (WSFVSFFAVFELGSLLCGVAT), 162 to 182 (VAGMGGSGIQNGAFTIIAGCV), 192 to 212 (GLLMGFAQLGIVIGPLIGGAF), 221 to 241 (CFYINLPIGAVVGLLLFFVHI), and 263 to 283 (LVGFVLFAPAAVQFLLALQYG). Residue Asn290 is glycosylated (N-linked (GlcNAc...) asparagine). 7 consecutive transmembrane segments (helical) span residues 293-313 (VVIGLFCGAGATFVCFILWEW), 336-356 (VVYGFLMATLLVASYYLPIYF), 369-389 (VYILPSILSQSALAIISGALV), 392-412 (FGYYLPWSLAGGIVSSVGNGL), 425-445 (WIGYQILLGAGRGAGLQMPII), 455-475 (LIPVAMALIMFCQSFFGSTFL), and 533-553 (VFYLAVGAAVATFVFSCGMGW).

Belongs to the major facilitator superfamily. TCR/Tet family.

The protein resides in the cell membrane. In terms of biological role, MFS-type transporter; part of the gene cluster that mediates the biosynthesis of azaphilone pigments (MonAzPs), very widely used as food colorant. The protein is MFS-type transporter pigP of Monascus ruber (Mold).